The sequence spans 216 residues: UPF0301 protein BBta_6966 (216 aa).

Belongs to the UPF0301 (AlgH) family.

The chain is UPF0301 protein BBta_6966 from Bradyrhizobium sp. (strain BTAi1 / ATCC BAA-1182).